Reading from the N-terminus, the 366-residue chain is Ribosomal RNA large subunit methyltransferase M (366 aa).

Residues S188, 221–224 (CPGG), D240, D260, and D277 contribute to the S-adenosyl-L-methionine site. The active-site Proton acceptor is K306.

Belongs to the class I-like SAM-binding methyltransferase superfamily. RNA methyltransferase RlmE family. RlmM subfamily. Monomer.

It localises to the cytoplasm. The catalysed reaction is cytidine(2498) in 23S rRNA + S-adenosyl-L-methionine = 2'-O-methylcytidine(2498) in 23S rRNA + S-adenosyl-L-homocysteine + H(+). In terms of biological role, catalyzes the 2'-O-methylation at nucleotide C2498 in 23S rRNA. This Salmonella arizonae (strain ATCC BAA-731 / CDC346-86 / RSK2980) protein is Ribosomal RNA large subunit methyltransferase M.